Consider the following 316-residue polypeptide: ATP synthase gamma chain (316 aa).

It belongs to the ATPase gamma chain family. As to quaternary structure, F-type ATPases have 2 components, CF(1) - the catalytic core - and CF(0) - the membrane proton channel. CF(1) has five subunits: alpha(3), beta(3), gamma(1), delta(1), epsilon(1). CF(0) has three main subunits: a, b and c.

Its subcellular location is the cellular thylakoid membrane. Its function is as follows. Produces ATP from ADP in the presence of a proton gradient across the membrane. The gamma chain is believed to be important in regulating ATPase activity and the flow of protons through the CF(0) complex. The sequence is that of ATP synthase gamma chain from Prochlorococcus marinus (strain SARG / CCMP1375 / SS120).